The sequence spans 310 residues: Spermatid maturation protein 1 (310 aa).

A helical transmembrane segment spans residues 29–49 (ILLLLGLIVCINIGINLVTLL). The segment at 215-238 (ALSHKNNAAGSGGCVEGEQAQGQP) is disordered. The stretch at 262–286 (VYDARDVRRRLRELTQEVEALSHCY) forms a coiled coil.

In terms of tissue distribution, testis-specific. Exclusively present in cytoplasm of steps 14-16 elongated spermatids (at protein level).

The protein resides in the membrane. Its subcellular location is the cytoplasm. Its function is as follows. Required for proper cytoplasm removal during spermatogenesis. In Mus musculus (Mouse), this protein is Spermatid maturation protein 1 (Spem1).